Reading from the N-terminus, the 261-residue chain is Short chain dehydrogenase/reductase astE (261 aa).

NADP(+)-binding residues include isoleucine 24, aspartate 70, asparagine 97, and lysine 131. Active-site proton donor residues include serine 150 and tyrosine 164. Tyrosine 164, lysine 168, valine 197, and threonine 199 together coordinate NADP(+). The active-site Lowers pKa of active site Tyr is lysine 168.

The protein belongs to the short-chain dehydrogenases/reductases (SDR) family.

It participates in secondary metabolite biosynthesis; terpenoid biosynthesis. Functionally, short chain dehydrogenase/reductase; part of the gene cluster that mediates the biosynthesis of astellolides, drimane-type sesquiterpene esters that show antimicrobial, anti-inflammatory, and anti-tumor activities. The first step in astellolide biosynthesis is performed by the sesquiterpene cyclase astC that catalyzes the formation of drimanyl pyrophosphate from farnesyl pyrophosphate. Drimanyl pyrophosphate is then dephosphorylated by the sesquiterpene phosphatase astI to produce drimanyl monophosphate which is further dephosphorylated to drim-8-ene-11-ol by atsK. Drim-8-ene-11-ol is converted to confertifolin, probably by the cytochrome P450 monooxygenase astD and/or the dehydrogenase astE. The cytochrome P450 monooxygenases astB, astF and astJ then hydroxylate confertifolin at C6, C14, or C15 to form trihydroxy confertifolin. The nonribosomal peptide synthetase astA catalyzes ester bond formation between trihydroxy contifolin and benzoic acid (BA) or 4-hydroxy benzoic acid (4HBA), leading to the formation of dideacetyl astellolides A and B, respectively. Finally, the O-acetyltransferase astG converts dideacetyl astellolides A and B into deacetyl astellolides A and B. The chain is Short chain dehydrogenase/reductase astE from Aspergillus oryzae (strain ATCC 42149 / RIB 40) (Yellow koji mold).